We begin with the raw amino-acid sequence, 124 residues long: Small ribosomal subunit protein uS12c (124 aa).

2 disordered regions span residues 1–28 (MPTIQQLVRSERHKSSKKTKSPALKGCP) and 104–124 (ASGVKDRKKSRSKYGAKQPKT). Basic residues-rich tracts occupy residues 11-20 (ERHKSSKKTK) and 109-124 (DRKKSRSKYGAKQPKT).

The protein belongs to the universal ribosomal protein uS12 family. Part of the 30S ribosomal subunit.

It localises to the plastid. Its subcellular location is the chloroplast. Functionally, with S4 and S5 plays an important role in translational accuracy. Located at the interface of the 30S and 50S subunits. In Gracilaria tenuistipitata var. liui (Red alga), this protein is Small ribosomal subunit protein uS12c (rps12).